The chain runs to 383 residues: Multidrug resistance protein MexA (383 aa).

The first 23 residues, 1 to 23 (MQRTPAMRVLVPALLVAISALSG), serve as a signal peptide directing secretion. C24 is lipidated: N-palmitoyl cysteine. C24 is lipidated: S-diacylglycerol cysteine. Residues 97 to 151 (ATYEADYQSAQANLASTQEQAQRYKLLVADQAVSKQQYADANAAYLQSKAAVEQA) are a coiled coil.

It belongs to the membrane fusion protein (MFP) (TC 8.A.1) family. In terms of assembly, component of the MexAB-OprM multidrug efflux complex, composed of six MexA subunits forming a hexameric tube, binding to a MexB trimer, which interact with the trimeric OprM outer membrane channel protein. OprM is thought to not directly contact MexB; instead, MexA joins MexB and OprM by forming a funnel-like hexamer anchored to the inner membrane. MexA may initially form a hexameric ring complex with MexB prior to OprM, then OprM undergoes a conformational change as it contacts MexA, allowing the periplasmic gate to open. It is thought that, under high intracellular substrate concentration, MexB ejects substrate into the tunnel formed by MexA-OprM; as the substrate level declines, conformational changes in MexB cause efflux to reduce and stop and the complex shifts to the closed state. MexB subunit acts as a substrate:proton antiporter and activity is enhanced significantly when in complex with MexA and OprM, in vitro.

It is found in the cell inner membrane. With respect to regulation, export of antibiotics and solvents is dramatically decreased in the presence of the protonophore carbonyl cyanide m-chlorophenylhydrazone (CCCP), therefore may be driven by a proton gradient. Antibiotic efflux is inhibited by pyridopyrimidine derivatives, such as ABI-PP, acting by binding to a hydrophobic pocket in MexB. Its function is as follows. The periplasmic linker component of the MexAB-OprM efflux system that confers multidrug resistance. Functions as the major efflux pump for n-hexane and p-xylene efflux. Has been shown in one study to be involved in the active efflux of the autoinducer N-(3-oxododecanoyl) homoserine lactone, thereby playing an indirect role in quorum-sensing; but has been shown in another study not to be involved in efflux of this autoinducer. Over-expression of the pump increases antibiotic and solvent efflux capacities. Implicated in the secretion of the siderophore pyoverdine. This is Multidrug resistance protein MexA (mexA) from Pseudomonas aeruginosa (strain ATCC 15692 / DSM 22644 / CIP 104116 / JCM 14847 / LMG 12228 / 1C / PRS 101 / PAO1).